A 596-amino-acid chain; its full sequence is MASLPPHAGPATPLSPTRLSRLQEKEELRELNDRLAHYIDRVRALELENDRLLLRISEKEEVTTREVSGIKTLYESELADARRVLDETARERARLQIEIGKVQAELEEARKSAKKREGELTVAQGRVKDLESLFHRSEAELATALSDKQGLETEVAELRAQLAKAEDGHAVAKKQLEKETLMRVDLENRCQSLQEELAFSKSVFEEEVRETRRRHERRLVEVDSSRQQEYDFKMAQALEDLRSQHDEQVRLYRVELEQTYQAKLDNAKLLSDQNDKAAHAAREELKEARMRVESLSYQLLGLQKQASAAENHIHELEEALAGERDKFRKMLDAKEQEMTEVRDAMQQQLAEYQELLDIKLALDMEISAYRKLLEGEEERLKLSPSPSSRITISRATSSSSSSSGVGMSVGQGRGKRRRLETEDTSGSPSRASRVSSGSRLAQQTVATGVVNIDEVDPEGRFVRLKNSSDKDQSLGNWRIKRQVLEGEDIAYKFTPKYVLRAGQTVTVWAAGAGATHSPPSTLVWKSQTNWGPGESFRTALVSADGEEVAVKAAKHSSVQGRENGEEEEEEEAEFGEEDLFHQQGDPRTTSRGCRLM.

The interval 1 to 20 (MASLPPHAGPATPLSPTRLS) is disordered. The head stretch occupies residues 1–26 (MASLPPHAGPATPLSPTRLSRLQEKE). T12 is modified (phosphothreonine). The residue at position 15 (S15) is a Phosphoserine. The IF rod domain occupies 24–380 (EKEELRELND…KLLEGEEERL (357 aa)). Residues 27–61 (ELRELNDRLAHYIDRVRALELENDRLLLRISEKEE) form a coil 1A region. K59 bears the N6-acetyllysine; alternate mark. Residue K59 forms a Glycyl lysine isopeptide (Lys-Gly) (interchain with G-Cter in SUMO2); alternate linkage. The interval 62 to 73 (VTTREVSGIKTL) is linker 1. Residues 74 to 207 (YESELADARR…AFSKSVFEEE (134 aa)) are coil 1B. Residues K173 and K233 each participate in a glycyl lysine isopeptide (Lys-Gly) (interchain with G-Cter in SUMO2) cross-link. The segment at 208–234 (VRETRRRHERRLVEVDSSRQQEYDFKM) is linker 2. The interval 235–378 (AQALEDLRSQ…YRKLLEGEEE (144 aa)) is coil 2. Residues S294 and S385 each carry the phosphoserine modification. Positions 376 to 440 (EEERLKLSPS…ASRVSSGSRL (65 aa)) are disordered. A tail region spans residues 379–596 (RLKLSPSPSS…RTTSRGCRLM (218 aa)). Residues 382 to 403 (LSPSPSSRITISRATSSSSSSS) show a composition bias toward low complexity. O-linked (GlcNAc) threonine glycosylation occurs at T391. A phosphoserine mark is found at S398, S400, and S402. Omega-N-methylarginine is present on R413. Residues 415–420 (KRRRLE) carry the Nuclear localization signal motif. Low complexity predominate over residues 425–439 (SGSPSRASRVSSGSR). One can recognise an LTD domain in the interval 438-559 (SRLAQQTVAT…VKAAKHSSVQ (122 aa)). Residue K465 forms a Glycyl lysine isopeptide (Lys-Gly) (interchain with G-Cter in SUMO2) linkage. S473 bears the Phosphoserine mark. The interval 552 to 596 (AAKHSSVQGRENGEEEEEEEAEFGEEDLFHQQGDPRTTSRGCRLM) is disordered. A compositionally biased stretch (acidic residues) spans 564–577 (GEEEEEEEAEFGEE). Residues 585 to 596 (DPRTTSRGCRLM) show a composition bias toward polar residues. The residue at position 593 (C593) is a Cysteine methyl ester. C593 is lipidated: S-farnesyl cysteine. Positions 594-596 (RLM) are cleaved as a propeptide — removed in mature form.

It belongs to the intermediate filament family. Dimer. Lamin dimers then assemble into dimeric head-to-tail polymers. Ultimately, two head-to-tail polymers assemble laterally into a protofilament with a uniformly shaped rod of 3.5 nm in diameter. Interacts with TMEM43. B-type lamins undergo a series of modifications, such as farnesylation and phosphorylation. Increased phosphorylation of the lamins occurs before envelope disintegration and probably plays a role in regulating lamin associations. In terms of processing, phosphorylation plays a key role in lamin organization, subcellular localization and nuclear envelope disintegration. Phosphorylation by CDK1 at Ser-15 and Ser-385 at the onset of mitosis drives lamin disassembly and nuclear envelope breakdown. In terms of tissue distribution, germ cell-specific.

It is found in the nucleus lamina. Lamins are intermediate filament proteins that assemble into a filamentous meshwork, and which constitute the major components of the nuclear lamina, a fibrous layer on the nucleoplasmic side of the inner nuclear membrane. Lamins provide a framework for the nuclear envelope, bridging the nuclear envelope and chromatin, thereby playing an important role in nuclear assembly, chromatin organization, nuclear membrane and telomere dynamics. The structural integrity of the lamina is strictly controlled by the cell cycle, as seen by the disintegration and formation of the nuclear envelope in prophase and telophase, respectively. The polypeptide is Lamin-B2 (Lmnb2) (Mus musculus (Mouse)).